The sequence spans 503 residues: Pentatricopeptide repeat-containing protein At2g30100, chloroplastic (503 aa).

The N-terminal 50 residues, 1–50, are a transit peptide targeting the chloroplast; sequence MAYAHVFASLTISTISLRRFLPRLHRNHSVKPNSRIICNLKLNYSAGKFR. PPR repeat units lie at residues 341 to 375, 376 to 410, and 411 to 445; these read IGVV…GREP, EADL…GSQR, and KKKT…GLHP.

Belongs to the PPR family. P subfamily.

The protein localises to the plastid. It is found in the chloroplast. The polypeptide is Pentatricopeptide repeat-containing protein At2g30100, chloroplastic (Arabidopsis thaliana (Mouse-ear cress)).